A 277-amino-acid chain; its full sequence is Energy-coupling factor transporter ATP-binding protein EcfA (277 aa).

Residues 4–238 (LETRDLTHIY…PELLTQTRLD (235 aa)) enclose the ABC transporter domain. 37 to 44 (GPNGAGKS) is a binding site for ATP.

It belongs to the ABC transporter superfamily. Energy-coupling factor EcfA family. Forms a stable energy-coupling factor (ECF) transporter complex composed of 2 membrane-embedded substrate-binding proteins (S component), 2 ATP-binding proteins (A component) and 2 transmembrane proteins (T component).

It localises to the cell membrane. Functionally, ATP-binding (A) component of a common energy-coupling factor (ECF) ABC-transporter complex. Unlike classic ABC transporters this ECF transporter provides the energy necessary to transport a number of different substrates. The sequence is that of Energy-coupling factor transporter ATP-binding protein EcfA from Methanoculleus marisnigri (strain ATCC 35101 / DSM 1498 / JR1).